Reading from the N-terminus, the 352-residue chain is MSEKTEQPTEKKLRDGRKEGQVVKSIEITSLFQLIALYLYFHFFTEKMILILIESITFTLQLVNKPFSYALTQLSHALIESLTSALLFLGAGVIVATVGSVFLQVGVVIASKAIGFKSEHINPVSNFKQIFSLHSVVELCKSSLKVIMLSLIFAFFFYYYASTFRALPYCGLACGVLVVSSLIKWLWVGVMVFYIVVGILDYSFQYYKIRKDLKMSKDDVKQEHKDLEGDPQMKTRRREMQSEIQSGSLAQSVKQSVAVVRNPTHIAVCLGYHPTDMPIPRVLEKGSDAQANYIVNIAERNCIPVVENVELARSLFFEVERGDKIPETLFEPVAALLRMVMKIDYAHSTETP.

4 helical membrane-spanning segments follow: residues 34-54, 89-109, 144-164, and 176-196; these read LIAL…ILIE, LGAG…GVVI, LKVI…ASTF, and VLVV…FYIV.

It belongs to the type III secretion exporter family.

It localises to the cell membrane. Its function is as follows. Part of a type III secretion system. The chain is Secretion system apparatus protein SsaU (ssaU) from Salmonella typhimurium (strain LT2 / SGSC1412 / ATCC 700720).